The following is a 158-amino-acid chain: Transcription elongation factor GreA (158 aa).

It belongs to the GreA/GreB family.

In terms of biological role, necessary for efficient RNA polymerase transcription elongation past template-encoded arresting sites. The arresting sites in DNA have the property of trapping a certain fraction of elongating RNA polymerases that pass through, resulting in locked ternary complexes. Cleavage of the nascent transcript by cleavage factors such as GreA or GreB allows the resumption of elongation from the new 3'terminus. GreA releases sequences of 2 to 3 nucleotides. The protein is Transcription elongation factor GreA of Psychrobacter sp. (strain PRwf-1).